A 361-amino-acid polypeptide reads, in one-letter code: Alanine racemase (361 aa).

Residue Lys34 is the Proton acceptor; specific for D-alanine of the active site. Residue Lys34 is modified to N6-(pyridoxal phosphate)lysine. Arg129 lines the substrate pocket. The Proton acceptor; specific for L-alanine role is filled by Tyr256. Met304 is a substrate binding site.

It belongs to the alanine racemase family. As to quaternary structure, homodimer. It depends on pyridoxal 5'-phosphate as a cofactor.

The catalysed reaction is L-alanine = D-alanine. The protein operates within amino-acid biosynthesis; D-alanine biosynthesis; D-alanine from L-alanine: step 1/1. Functionally, catalyzes the interconversion of L-alanine and D-alanine. May also act on other amino acids. The polypeptide is Alanine racemase (alr) (Corynebacterium glutamicum (strain ATCC 13032 / DSM 20300 / JCM 1318 / BCRC 11384 / CCUG 27702 / LMG 3730 / NBRC 12168 / NCIMB 10025 / NRRL B-2784 / 534)).